A 134-amino-acid polypeptide reads, in one-letter code: Psoriasis susceptibility 1 candidate gene 2 protein homolog (134 aa).

The N-terminal stretch at 1–21 (MLTWKLLGLLVLCLCAGGISG) is a signal peptide. The interval 18-134 (GISGNGDPSP…DLDPPQEEYR (117 aa)) is disordered. Pro residues-rich tracts occupy residues 39–67 (PPLP…PPGS) and 81–98 (PPKP…PDDP). The segment covering 122-134 (EEPDLDPPQEEYR) has biased composition (acidic residues).

It localises to the secreted. This Mus musculus (Mouse) protein is Psoriasis susceptibility 1 candidate gene 2 protein homolog (Psors1c2).